A 207-amino-acid chain; its full sequence is Thymidylate kinase (207 aa).

ATP is bound at residue 12-19; sequence GVDGAGKS.

The protein belongs to the thymidylate kinase family.

The catalysed reaction is dTMP + ATP = dTDP + ADP. Functionally, phosphorylation of dTMP to form dTDP in both de novo and salvage pathways of dTTP synthesis. The polypeptide is Thymidylate kinase (Bordetella petrii (strain ATCC BAA-461 / DSM 12804 / CCUG 43448)).